Here is a 109-residue protein sequence, read N- to C-terminus: Nucleoid-associated protein Bcer98_0019 (109 aa).

It belongs to the YbaB/EbfC family. As to quaternary structure, homodimer.

It is found in the cytoplasm. The protein resides in the nucleoid. Binds to DNA and alters its conformation. May be involved in regulation of gene expression, nucleoid organization and DNA protection. The polypeptide is Nucleoid-associated protein Bcer98_0019 (Bacillus cytotoxicus (strain DSM 22905 / CIP 110041 / 391-98 / NVH 391-98)).